The primary structure comprises 1287 residues: MEIQQTHRKINRPLVSLALVGALVSITPQQSHAAFFTTVIIPAIVGGIATGTAVGTVSGLLGWGLKQAEEANKTPDKPDKVWRIQAGKGFNEFPNKEYDLYKSLLSSKIDGGWDWGNAATHYWIKGGQWNKLEVDMKDAVGTYKLSGLRNFTGGDLDVNMQKATLRLGQFNGNSFTSYKDSADRTTRVDFNAKNILIDNFLEINNRVGSGAGRKASSTVLTLQASEGITSSKNAEISLYDGATLNLASNSVKLNGNVWMGRLQYVGAYLAPSYSTINTSKVTGEVNFNHLTVGDHNAAQAGIIASNKTHIGTLDLWQSAGLNIIAPPEGGYKDKPNNTPSQSGAKNDKQESSQNNSNTQVINPPNSTQKTEVQPTQVIDGPFAGGKDTVVNIDRINTKADGTIKVGGFKASLTTNAAHLNIGKGGVNLSNQASGRTLLVENLTGNITVDGPLRVNNQVGGYALAGSSANFEFKAGVDTKNGTATFNNDISLGRFVNLKVDAHTANFKGIDTGNGGFNTLDFSGVTNKVNINKLITASTNVAVKNFNINELIVKTNGVSVGEYTHFSEDIGSQSRINTVRLETGTRSIFSGGVKFKSGEKLVIDEFYYSPWNYFDARNIKNVEITRKFASSTPENPWGTSKLMFNNLTLGQNAVMDYSQFSNLTIQGDFINNQGTINYLVRGGKVATLNVGNAAAMMFNNDIDSATGFYKPLIKINSAQDLIKNTEHVLLKAKIIGYGNVSTGTNGISNVNLEEQFKERLALYNNNNRMDTCVVRNTDDIKACGMAIGNQSMVNNPDNYKYLIGKAWKNIGISKTANGSKISVYYLGNSTPTENGGNTTNLPTNTTNNARFASYALIKNAPFAHSATPNLVAINQHDFGTIESVFELANRSKDIDTLYANSGAQGRDLLQTLLIDSHDAGYARTMIDATSANEITKQLNTATTTLNNIASLEHKTSSLQTLSLSNAMILNSRLVNLSRRHTNNIDSFAKRLQALKDQRFASLESAAEVLYQFAPKYEKPTNVWANAIGGASLNNGGNASLYGTSAGVDAYLNGQVEAIVGGFGSYGYSSFNNQANSLNSGANNTNFGVYSRIFANQHEFDFEAQGALGSDQSSLNFKSALLRDLNQSYNYLAYSAATRASYGYDFAFFRNALVLKPSVGVSYNHLGSTNFKSNSTNKVALSNGSSSQHLFNASANVEARYYYGDTSYFYMNAGVLQEFANFGSSNAVSLNTFKVNATRNPLNTHARVMMGGELKLAKEVFLNLGVVYLHNLISNIGHFASNLGMRYSF.

Positions 1–33 (MEIQQTHRKINRPLVSLALVGALVSITPQQSHA) are cleaved as a signal peptide. The tract at residues 326–381 (PPEGGYKDKPNNTPSQSGAKNDKQESSQNNSNTQVINPPNSTQKTEVQPTQVIDGP) is disordered. Polar residues predominate over residues 351 to 376 (SSQNNSNTQVINPPNSTQKTEVQPTQ). The Autotransporter domain occupies 1014–1287 (KYEKPTNVWA…ASNLGMRYSF (274 aa)).

Its subcellular location is the periplasm. It is found in the secreted. The protein resides in the cell surface. It localises to the cell outer membrane. Functionally, induces vacuolation of eukaryotic cells. Causes ulceration and gastric lesions. The chain is Vacuolating cytotoxin autotransporter (vacA) from Helicobacter pylori (Campylobacter pylori).